We begin with the raw amino-acid sequence, 179 residues long: MNRLKDQYLKEIVPALMSKFNYDSVMEVPKIDKIVINTGVGDATANAKVLDSAVEELALITGQKPVITKAKNSIAGFRLREGMPIGAKVTLRGERMYDFLDKLVTVSLPRVRDFRGVSKKAFDGRGNYTLGVREQLIFPEIDYDQVSKVRGMDVVIVTTAKSDEESHELLTQLGMPFQK.

It belongs to the universal ribosomal protein uL5 family. Part of the 50S ribosomal subunit; part of the 5S rRNA/L5/L18/L25 subcomplex. Contacts the 5S rRNA and the P site tRNA. Forms a bridge to the 30S subunit in the 70S ribosome.

In terms of biological role, this is one of the proteins that bind and probably mediate the attachment of the 5S RNA into the large ribosomal subunit, where it forms part of the central protuberance. In the 70S ribosome it contacts protein S13 of the 30S subunit (bridge B1b), connecting the 2 subunits; this bridge is implicated in subunit movement. Contacts the P site tRNA; the 5S rRNA and some of its associated proteins might help stabilize positioning of ribosome-bound tRNAs. The protein is Large ribosomal subunit protein uL5 of Listeria innocua serovar 6a (strain ATCC BAA-680 / CLIP 11262).